The sequence spans 257 residues: NAD-capped RNA hydrolase NudC (257 aa).

Arg69 is a binding site for substrate. Zn(2+) is bound by residues Cys98 and Cys101. Glu111 contacts substrate. Residues Cys116 and Cys119 each coordinate Zn(2+). Residue Tyr124 coordinates substrate. In terms of domain architecture, Nudix hydrolase spans 125 to 248 (PQIAPCIIVA…TVARRLIEDT (124 aa)). Positions 158, 174, and 178 each coordinate a divalent metal cation. The Nudix box motif lies at 159–180 (GFVEVGETLEQAVAREVMEESG). 192 to 199 (QPWPFPQS) provides a ligand contact to substrate. An a divalent metal cation-binding site is contributed by Glu219. Ala241 is a binding site for substrate.

This sequence belongs to the Nudix hydrolase family. NudC subfamily. In terms of assembly, homodimer. Mg(2+) serves as cofactor. Requires Mn(2+) as cofactor. It depends on Zn(2+) as a cofactor.

The catalysed reaction is a 5'-end NAD(+)-phospho-ribonucleoside in mRNA + H2O = a 5'-end phospho-adenosine-phospho-ribonucleoside in mRNA + beta-nicotinamide D-ribonucleotide + 2 H(+). It carries out the reaction NAD(+) + H2O = beta-nicotinamide D-ribonucleotide + AMP + 2 H(+). It catalyses the reaction NADH + H2O = reduced beta-nicotinamide D-ribonucleotide + AMP + 2 H(+). In terms of biological role, mRNA decapping enzyme that specifically removes the nicotinamide adenine dinucleotide (NAD) cap from a subset of mRNAs by hydrolyzing the diphosphate linkage to produce nicotinamide mononucleotide (NMN) and 5' monophosphate mRNA. The NAD-cap is present at the 5'-end of some mRNAs and stabilizes RNA against 5'-processing. Has preference for mRNAs with a 5'-end purine. Catalyzes the hydrolysis of a broad range of dinucleotide pyrophosphates. This Klebsiella pneumoniae subsp. pneumoniae (strain ATCC 700721 / MGH 78578) protein is NAD-capped RNA hydrolase NudC.